Consider the following 241-residue polypeptide: uncharacterized protein (241 aa).

7 helical membrane passes run 12–32, 39–59, 89–109, 117–137, 152–172, 180–200, and 215–235; these read ITEI…LLLL, LLWL…EMKF, VYDV…ICYT, YYTF…NCVV, LFEY…ATML, IHFY…WFVY, and YVEA…SPLI.

This sequence belongs to the mimivirus L68/R809 family.

It is found in the membrane. This is an uncharacterized protein from Acanthamoeba polyphaga mimivirus (APMV).